The following is a 111-amino-acid chain: MIQVLLVTLCLAVFPYQGSSIILESGNVNDYEVVYPRKVTALPKGAIQPKNPCCDAATCKLTPGSQCAEGLCCDQCKFIKAGKICRRARGDNPDYRCTGQSGDCPRKHFYA.

An N-terminal signal peptide occupies residues M1–S20. Positions I21 to A46 are excised as a propeptide. One can recognise a Disintegrin domain in the interval I47–A111. Q48 carries the post-translational modification Pyrrolidone carboxylic acid; in Disintegrin acostatin-alpha, processed form. Cystine bridges form between C53/C76, C67/C73, C72/C97, and C85/C104. The Cell attachment site motif lies at R89–D91. A propeptide spanning residues Y110 to A111 is cleaved from the precursor.

The protein belongs to the disintegrin family. Dimeric disintegrin subfamily. Heterodimer with subunit beta; disulfide-linked. In terms of tissue distribution, expressed by the venom gland.

The protein resides in the secreted. In terms of biological role, inhibits fibrinogen interaction with platelets. Acts by binding to alpha-IIb/beta-3 (ITGA2B/ITGB3) on the platelet surface and inhibits ADP-induced platelet aggregation in human platelet-rich plasma. The polypeptide is Disintegrin acostatin-alpha (Agkistrodon contortrix contortrix (Southern copperhead)).